A 125-amino-acid chain; its full sequence is UPF0231 protein APP7_1023 (125 aa).

Belongs to the UPF0231 family.

In Actinobacillus pleuropneumoniae serotype 7 (strain AP76), this protein is UPF0231 protein APP7_1023.